The following is a 1514-amino-acid chain: Polycomb group protein ASXL1 (1514 aa).

Residues 11–86 (RTWAEAARLV…RISLFTLKKD (76 aa)) form the HTH HARE-type domain. Disordered stretches follow at residues 95 to 170 (ATVD…VMLP) and 183 to 249 (HVEP…RGEE). Residues 98–107 (DGDEPEDSAD) are compositionally biased toward acidic residues. Residues 111–145 (CGSNEASTVSGENDVSLDETSSNASCSTESQSRPL) are compositionally biased toward polar residues. Residues 199–209 (SGSPSSSSSGS) are compositionally biased toward low complexity. Residues 243 to 246 (KRNR) form an interaction with nucleosomal DNA forming a DNA clamp with BAP1 region. The DEUBAD domain occupies 255 to 364 (PGSILVNTNL…FEDYYGQKLG (110 aa)). Positions 284 to 288 (LLLLL) match the LXXLL motif 1 motif. Positions 300 to 655 (LLRLSGSALN…GGGSGAIDEG (356 aa)) are interaction with NCOA1. Residues 310–315 (NEFFTH) carry the NEF motif motif. The interaction with nucleosomal DNA stretch occupies residues 336–346 (RLRQEMEKEKK). 5 disordered regions span residues 378-543 (EEAK…EDRQ), 635-823 (TTAI…FDNM), 895-914 (SDPE…EKEW), 926-952 (SVPQ…SDSE), and 964-995 (ISEA…VDAS). Residues 408-415 (FKKRSRPD) carry the Nuclear localization signal motif. Over residues 458–473 (VNSTPGPDVSSATSGQ) the composition is skewed to polar residues. Phosphoserine occurs at positions 498 and 500. Composition is skewed to basic and acidic residues over residues 514 to 525 (QETKDQKRKSFE) and 533 to 543 (PEKKPRLEDRQ). A compositionally biased stretch (gly residues) spans 638–654 (IGGGGGPGGGGSGAIDE). Residues 678-692 (PSTSGESASDLQRTQ) are compositionally biased toward polar residues. Basic and acidic residues-rich tracts occupy residues 713 to 728 (ARRE…ESCL) and 779 to 793 (LLDD…REDQ). The LXXLL motif 2 signature appears at 808–812 (LGDLL). Residues 971–980 (HSESTDTASD) are compositionally biased toward polar residues. Positions 1082 to 1087 (LVMHLL) are required for interaction with RARA. Disordered stretches follow at residues 1095-1131 (KVLP…ENNR), 1213-1234 (EQKE…GQCL), and 1256-1338 (SEQT…VSAD). Positions 1119–1129 (DRGTLQGTGEN) are enriched in polar residues. Composition is skewed to polar residues over residues 1256-1269 (SEQT…QNNA) and 1313-1324 (SKNSVSGGVQTT). Residues 1476-1513 (SLQCACSLKAMIMCQGCGAFCHDDCIGPSKLCVLCLVV) form a PHD-type; atypical zinc finger.

Belongs to the Asx family. In terms of assembly, core component of the polycomb repressive deubiquitinase (PR-DUB) complex, at least composed of BAP1, one of ASXL1, ASXL2 or (probably) ASXL3, and one of MBD5 or MBD6. Distinct combinations of ASXL and MBD proteins may preferentially bind specific histone modification marks. The PR-DUB core associates with a number of accessory proteins, including FOXK1, FOXK2, KDM1B, HCFC1 and OGT; KDM1B specifically associates with ASXL2 PR-DUB complexes. Interacts (via DEUBAD domain) with BAP1 (via ULD domain); the interaction is direct and forms a ubiquitin binding cleft. The interaction with BAP1 is important for maintaining BAP1 stability. Together with BAP1, associates (via DEUBAD domain) with nucleosomes; interacts with nucleosomal DNA and stabilizes the orientation of the nucleosome to line up the PR-DUB complex active site with its H2AK118ub1 substrate. Interacts (via PHD domain) with MBD5 and MBD6 (via MBD domain); the interaction is probably direct and mediates association of MBD proteins with the PR-DUB core. Interacts with RARA, RXRA. Interacts with NCOA1. Interacts with PPARA and PPARG. Ubiquitinated by TRIP12, leading to its subsequent degradation following binding of N(6)-methyladenine methylated DNA (6mA).

Its subcellular location is the nucleus. Functionally, probable Polycomb group (PcG) protein involved in transcriptional regulation mediated by ligand-bound nuclear hormone receptors, such as retinoic acid receptors (RARs) and peroxisome proliferator-activated receptor gamma (PPARG). Acts as a coactivator of RARA and RXRA through association with NCOA1. Acts as a corepressor for PPARG and suppresses its adipocyte differentiation-inducing activity. Non-catalytic component of the PR-DUB complex, a complex that specifically mediates deubiquitination of histone H2A monoubiquitinated at 'Lys-119' (H2AK119ub1). Acts as a sensor of N(6)-methyladenine methylation on DNA (6mA): recognizes and binds 6mA DNA, leading to its ubiquitination and degradation by TRIP12, thereby inactivating the PR-DUB complex and regulating Polycomb silencing. The PR-DUB complex is an epigenetic regulator of gene expression and acts as a transcriptional coactivator, affecting genes involved in development, cell communication, signaling, cell proliferation and cell viability. ASXL1, ASXL2 and ASXL3 function redundantly in the PR-DUB complex. The ASXL proteins are essential for chromatin recruitment and transcriptional activation of associated genes. ASXL1 and ASXL2 are important for BAP1 protein stability. Together with BAP1, negatively regulates epithelial-mesenchymal transition (EMT) of trophoblast stem cells during placental development by regulating genes involved in epithelial cell integrity, cell adhesion and cytoskeletal organization. The chain is Polycomb group protein ASXL1 (Asxl1) from Mus musculus (Mouse).